Consider the following 245-residue polypeptide: Putative insertion sequence ATP-binding protein y4pL (245 aa).

106–113 (GPSGVGKS) serves as a coordination point for ATP.

Belongs to the IS21/IS1162 putative ATP-binding protein family.

The polypeptide is Putative insertion sequence ATP-binding protein y4pL (Sinorhizobium fredii (strain NBRC 101917 / NGR234)).